The chain runs to 48 residues: Large ribosomal subunit protein bL32 (48 aa).

The interval 24–48 (LPMPIKDKDGSYKMPHRVNPVTKEY) is disordered.

Belongs to the bacterial ribosomal protein bL32 family.

This chain is Large ribosomal subunit protein bL32, found in Campylobacter lari (strain RM2100 / D67 / ATCC BAA-1060).